The sequence spans 546 residues: Zinc finger and BTB domain-containing protein 7A (546 aa).

One can recognise a BTB domain in the interval Cys-34–Thr-101. A disordered region spans residues Gln-189–Glu-288. 3 C2H2-type zinc fingers span residues Gln-359 to His-381, Tyr-387 to His-409, and Tyr-415 to His-437. A C2H2-type 4; atypical zinc finger spans residues Tyr-443–Cys-467. The disordered stretch occupies residues Lys-463–Ser-546. The span at Ala-534 to Ser-546 shows a compositional bias: low complexity.

It is found in the nucleus. In terms of biological role, transcription factor that represses the transcription of a wide range of genes involved in cell proliferation and differentiation. Directly and specifically binds to the consensus sequence 5'-[GA][CA]GACCCCCCCCC-3' and represses transcription both by regulating the organization of chromatin and through the direct recruitment of transcription factors to gene regulatory regions. May also play a role, independently of its transcriptional activity, in double-strand break repair via classical non-homologous end joining/cNHEJ and in alternative splicing. The protein is Zinc finger and BTB domain-containing protein 7A of Gallus gallus (Chicken).